Here is a 1073-residue protein sequence, read N- to C-terminus: Transmembrane protein 132E (1073 aa).

A signal peptide spans 1–33 (MGHFVVQGDLPWILCSLRLVIMIIAGKVSPTSS). Residues 34-899 (DALFSVPVPS…MTDLEIGMYA (866 aa)) lie on the Extracellular side of the membrane. Asn102 is a glycosylation site (N-linked (GlcNAc...) asparagine). The interval 246-270 (DPDSNDECGESYPRRGGPSRGESLS) is disordered. Asn324, Asn396, and Asn746 each carry an N-linked (GlcNAc...) asparagine glycan. Residues 900–920 (LLGVFCLAILVFLINCIVFVL) form a helical membrane-spanning segment. Residues 921 to 1073 (KYRHKRIPPE…DYMRRIKEIA (153 aa)) lie on the Cytoplasmic side of the membrane. Polar residues predominate over residues 952 to 970 (TQSDLSPQTVESPSNTLEG). The tract at residues 952 to 1024 (TQSDLSPQTV…PTSKRKRVKF (73 aa)) is disordered. The span at 982 to 994 (SGSSQTSVQSQVH) shows a compositional bias: low complexity.

This sequence belongs to the TMEM132 family.

It is found in the membrane. Required for normal inner ear hair cell function and hearing. This Danio rerio (Zebrafish) protein is Transmembrane protein 132E (tmem132e).